Consider the following 595-residue polypeptide: DNA mismatch repair protein MutL (595 aa).

Belongs to the DNA mismatch repair MutL/HexB family.

This protein is involved in the repair of mismatches in DNA. It is required for dam-dependent methyl-directed DNA mismatch repair. May act as a 'molecular matchmaker', a protein that promotes the formation of a stable complex between two or more DNA-binding proteins in an ATP-dependent manner without itself being part of a final effector complex. The polypeptide is DNA mismatch repair protein MutL (Rhodopseudomonas palustris (strain TIE-1)).